We begin with the raw amino-acid sequence, 615 residues long: DNA mismatch repair protein MutL (615 aa).

Residues 370-397 (EPVAPRYTPAPASGSRPAAPWPNTQPGY) are disordered. Residues 378–391 (PAPASGSRPAAPWP) are compositionally biased toward low complexity.

It belongs to the DNA mismatch repair MutL/HexB family.

This protein is involved in the repair of mismatches in DNA. It is required for dam-dependent methyl-directed DNA mismatch repair. May act as a 'molecular matchmaker', a protein that promotes the formation of a stable complex between two or more DNA-binding proteins in an ATP-dependent manner without itself being part of a final effector complex. In Shigella dysenteriae serotype 1 (strain Sd197), this protein is DNA mismatch repair protein MutL.